The chain runs to 174 residues: Small ribosomal subunit protein uS12m (174 aa).

It belongs to the universal ribosomal protein uS12 family. As to quaternary structure, component of the mitochondrial small ribosomal subunit (mt-SSU). Mature N.crassa 74S mitochondrial ribosomes consist of a small (37S) and a large (54S) subunit. The 37S small subunit contains a 16S ribosomal RNA (16S mt-rRNA) and 32 different proteins. The 54S large subunit contains a 23S rRNA (23S mt-rRNA) and 42 different proteins. uS12m forms part of the decoding center of the mt-SSU.

Its subcellular location is the mitochondrion. Its function is as follows. Component of the mitochondrial ribosome (mitoribosome), a dedicated translation machinery responsible for the synthesis of mitochondrial genome-encoded proteins, including at least some of the essential transmembrane subunits of the mitochondrial respiratory chain. The mitoribosomes are attached to the mitochondrial inner membrane and translation products are cotranslationally integrated into the membrane. This is Small ribosomal subunit protein uS12m (mrps12) from Neurospora crassa (strain ATCC 24698 / 74-OR23-1A / CBS 708.71 / DSM 1257 / FGSC 987).